A 658-amino-acid polypeptide reads, in one-letter code: UvrABC system protein B (658 aa).

Residues Asp26–Pro414 enclose the Helicase ATP-binding domain. Gly39 to Thr46 serves as a coordination point for ATP. The Beta-hairpin motif lies at Tyr92–Ile115. The Helicase C-terminal domain occupies Gln430 to Ile596. The region spanning Glu622–Glu657 is the UVR domain.

This sequence belongs to the UvrB family. Forms a heterotetramer with UvrA during the search for lesions. Interacts with UvrC in an incision complex.

The protein resides in the cytoplasm. In terms of biological role, the UvrABC repair system catalyzes the recognition and processing of DNA lesions. A damage recognition complex composed of 2 UvrA and 2 UvrB subunits scans DNA for abnormalities. Upon binding of the UvrA(2)B(2) complex to a putative damaged site, the DNA wraps around one UvrB monomer. DNA wrap is dependent on ATP binding by UvrB and probably causes local melting of the DNA helix, facilitating insertion of UvrB beta-hairpin between the DNA strands. Then UvrB probes one DNA strand for the presence of a lesion. If a lesion is found the UvrA subunits dissociate and the UvrB-DNA preincision complex is formed. This complex is subsequently bound by UvrC and the second UvrB is released. If no lesion is found, the DNA wraps around the other UvrB subunit that will check the other stand for damage. This Geobacillus kaustophilus (strain HTA426) protein is UvrABC system protein B.